A 330-amino-acid polypeptide reads, in one-letter code: Phosphate acyltransferase (330 aa).

This sequence belongs to the PlsX family. In terms of assembly, homodimer. Probably interacts with PlsY.

Its subcellular location is the cytoplasm. The catalysed reaction is a fatty acyl-[ACP] + phosphate = an acyl phosphate + holo-[ACP]. Its pathway is lipid metabolism; phospholipid metabolism. Functionally, catalyzes the reversible formation of acyl-phosphate (acyl-PO(4)) from acyl-[acyl-carrier-protein] (acyl-ACP). This enzyme utilizes acyl-ACP as fatty acyl donor, but not acyl-CoA. The protein is Phosphate acyltransferase of Bacillus licheniformis (strain ATCC 14580 / DSM 13 / JCM 2505 / CCUG 7422 / NBRC 12200 / NCIMB 9375 / NCTC 10341 / NRRL NRS-1264 / Gibson 46).